A 177-amino-acid polypeptide reads, in one-letter code: ATP synthase subunit b (177 aa).

The helical transmembrane segment at 19 to 39 (LFPNLPNFIAHVIATIVLVVI) threads the bilayer.

Belongs to the ATPase B chain family. As to quaternary structure, F-type ATPases have 2 components, F(1) - the catalytic core - and F(0) - the membrane proton channel. F(1) has five subunits: alpha(3), beta(3), gamma(1), delta(1), epsilon(1). F(0) has three main subunits: a(1), b(2) and c(10-14). The alpha and beta chains form an alternating ring which encloses part of the gamma chain. F(1) is attached to F(0) by a central stalk formed by the gamma and epsilon chains, while a peripheral stalk is formed by the delta and b chains.

The protein resides in the cell membrane. In terms of biological role, f(1)F(0) ATP synthase produces ATP from ADP in the presence of a proton or sodium gradient. F-type ATPases consist of two structural domains, F(1) containing the extramembraneous catalytic core and F(0) containing the membrane proton channel, linked together by a central stalk and a peripheral stalk. During catalysis, ATP synthesis in the catalytic domain of F(1) is coupled via a rotary mechanism of the central stalk subunits to proton translocation. Its function is as follows. Component of the F(0) channel, it forms part of the peripheral stalk, linking F(1) to F(0). In Mesoplasma florum (strain ATCC 33453 / NBRC 100688 / NCTC 11704 / L1) (Acholeplasma florum), this protein is ATP synthase subunit b.